A 461-amino-acid chain; its full sequence is Cysteine--tRNA ligase (461 aa).

Residue Cys28 coordinates Zn(2+). The 'HIGH' region motif lies at 30-40; the sequence is ITVYDLCHIGH. The Zn(2+) site is built by Cys209, His234, and Glu238. The short motif at 266–270 is the 'KMSKS' region element; that stretch reads KMSKS. Lys269 serves as a coordination point for ATP.

It belongs to the class-I aminoacyl-tRNA synthetase family. As to quaternary structure, monomer. The cofactor is Zn(2+).

It is found in the cytoplasm. The enzyme catalyses tRNA(Cys) + L-cysteine + ATP = L-cysteinyl-tRNA(Cys) + AMP + diphosphate. This chain is Cysteine--tRNA ligase, found in Cronobacter sakazakii (strain ATCC BAA-894) (Enterobacter sakazakii).